A 398-amino-acid chain; its full sequence is Vacuolar protease A (398 aa).

Residues 1-18 (MKSTSLLTASVLLGSASA) form the signal peptide. A propeptide spans 19–70 (AVHKLKLNKVPLDEQLYTHNIDAHVRALGQKYMGIRPNVHQELLEENSLNDM) (activation peptide). A Peptidase A1 domain is found at 85–395 (YFSEISLGTP…DLGNNAVGLA (311 aa)). The active site involves Asp103. A disulfide bond links Cys116 and Cys121. Asn138 carries an N-linked (GlcNAc...) asparagine glycan. Residue Asp287 is part of the active site. Cys321 and Cys354 are disulfide-bonded. Asn338 carries an N-linked (GlcNAc...) asparagine glycan.

Belongs to the peptidase A1 family.

Its subcellular location is the vacuole lumen. The protein resides in the secreted. The enzyme catalyses Hydrolysis of proteins with broad specificity for peptide bonds. Cleaves -Leu-Leu-|-Val-Tyr- bond in a synthetic substrate. Does not act on esters of Tyr or Arg.. Functionally, vacuolar aspartic endopeptidase which is probably also secreted and contributes to virulence. This chain is Vacuolar protease A (pep2), found in Aspergillus fumigatus (strain ATCC MYA-4609 / CBS 101355 / FGSC A1100 / Af293) (Neosartorya fumigata).